A 193-amino-acid polypeptide reads, in one-letter code: GTP cyclohydrolase 1 (193 aa).

Zn(2+) contacts are provided by Cys83, His86, and Cys154.

This sequence belongs to the GTP cyclohydrolase I family. As to quaternary structure, homomer.

The enzyme catalyses GTP + H2O = 7,8-dihydroneopterin 3'-triphosphate + formate + H(+). Its pathway is cofactor biosynthesis; 7,8-dihydroneopterin triphosphate biosynthesis; 7,8-dihydroneopterin triphosphate from GTP: step 1/1. This Porphyromonas gingivalis (strain ATCC 33277 / DSM 20709 / CIP 103683 / JCM 12257 / NCTC 11834 / 2561) protein is GTP cyclohydrolase 1.